The following is a 212-amino-acid chain: Pyridoxine/pyridoxamine 5'-phosphate oxidase (212 aa).

Residues 61 to 66, 76 to 77, Lys83, and Gln105 each bind FMN; these read RSVLLK and YT. Lys66 is a substrate binding site. Positions 123, 127, and 131 each coordinate substrate. FMN is bound by residues 140 to 141 and Trp185; that span reads QS. 191-193 contacts substrate; sequence RLH. Arg195 is an FMN binding site.

This sequence belongs to the pyridoxamine 5'-phosphate oxidase family. Homodimer. The cofactor is FMN.

The catalysed reaction is pyridoxamine 5'-phosphate + O2 + H2O = pyridoxal 5'-phosphate + H2O2 + NH4(+). The enzyme catalyses pyridoxine 5'-phosphate + O2 = pyridoxal 5'-phosphate + H2O2. It participates in cofactor metabolism; pyridoxal 5'-phosphate salvage; pyridoxal 5'-phosphate from pyridoxamine 5'-phosphate: step 1/1. Its pathway is cofactor metabolism; pyridoxal 5'-phosphate salvage; pyridoxal 5'-phosphate from pyridoxine 5'-phosphate: step 1/1. In terms of biological role, catalyzes the oxidation of either pyridoxine 5'-phosphate (PNP) or pyridoxamine 5'-phosphate (PMP) into pyridoxal 5'-phosphate (PLP). The chain is Pyridoxine/pyridoxamine 5'-phosphate oxidase from Dichelobacter nodosus (strain VCS1703A).